We begin with the raw amino-acid sequence, 276 residues long: MDWILICKALILGVVEGLTEFLPVSSTGHLIVAGSFLNFNDSHAKTFDVVIQFGAILAVCWEYRQRIASIVSGLPSRPDARRFTLNVVIATIPAIALGLLFEKKIKAVLFSPVPVAFALVVGGAIILWAEARQRERREPPRVMSVDELTPLDALKVGIAQCFALIPGMSRSGSTIIGGMLFGLDRRVATEFSFFLAIPIIFGATLYETVKDWQAFTVDSLGLFVLGAVAAFVSAFVCVRWLLRYVASHDFTVFAWYRIAFGLFVLLVGYSGWLNWA.

7 helical membrane-spanning segments follow: residues 4-24, 46-63, 83-103, 108-128, 187-207, 217-237, and 252-272; these read ILIC…FLPV, TFDV…CWEY, FTLN…LFEK, VLFS…IILW, VATE…TLYE, VDSL…AFVC, and VFAW…YSGW.

It belongs to the UppP family.

The protein localises to the cell inner membrane. It catalyses the reaction di-trans,octa-cis-undecaprenyl diphosphate + H2O = di-trans,octa-cis-undecaprenyl phosphate + phosphate + H(+). In terms of biological role, catalyzes the dephosphorylation of undecaprenyl diphosphate (UPP). Confers resistance to bacitracin. The sequence is that of Undecaprenyl-diphosphatase 1 from Burkholderia lata (strain ATCC 17760 / DSM 23089 / LMG 22485 / NCIMB 9086 / R18194 / 383).